The following is a 315-amino-acid chain: Secreted frizzled-related protein 3 (315 aa).

A signal peptide spans 1 to 21 (MWRGLPALALAALLLLGRAPA). An FZ domain is found at 22–142 (GRAAACEPVR…LYDRGVCISP (121 aa)). 5 disulfide bridges follow: Cys27/Cys88, Cys35/Cys81, Cys72/Cys111, Cys100/Cys139, and Cys104/Cys128. A glycan (N-linked (GlcNAc...) asparagine) is linked at Asn41. An NTR domain is found at 170-290 (CKCKPIKATQ…WDQKLRHLGK (121 aa)). The segment at 284–315 (KLRHLGKGKGEPGQSDSALKTGKPGNARQTRS) is disordered.

It belongs to the secreted frizzled-related protein (sFRP) family.

Its subcellular location is the secreted. Its function is as follows. Soluble frizzled-related proteins (sFRPS) function as modulators of Wnt signaling through direct interaction with Wnts. They have a role in regulating cell growth and differentiation in specific cell types. SFRP3/FRZB appears to be involved in limb skeletogenesis. Antagonist of Wnt8 signaling. Regulates chondrocyte maturation and long bone development. This Gallus gallus (Chicken) protein is Secreted frizzled-related protein 3 (FRZB).